A 240-amino-acid chain; its full sequence is tRNA (guanine-N(7)-)-methyltransferase (240 aa).

The S-adenosyl-L-methionine site is built by E71, E96, D123, and D146. D146 is a catalytic residue. Residues K150, D182, and 219–222 contribute to the substrate site; that span reads TKFE.

This sequence belongs to the class I-like SAM-binding methyltransferase superfamily. TrmB family.

It catalyses the reaction guanosine(46) in tRNA + S-adenosyl-L-methionine = N(7)-methylguanosine(46) in tRNA + S-adenosyl-L-homocysteine. It functions in the pathway tRNA modification; N(7)-methylguanine-tRNA biosynthesis. Functionally, catalyzes the formation of N(7)-methylguanine at position 46 (m7G46) in tRNA. The sequence is that of tRNA (guanine-N(7)-)-methyltransferase from Hydrogenovibrio crunogenus (strain DSM 25203 / XCL-2) (Thiomicrospira crunogena).